The following is a 301-amino-acid chain: Thiosulfate sulfurtransferase (301 aa).

Rhodanese domains lie at 31–138 and 171–289; these read GSPG…DTSY and QSGG…MPIE. Cys248 acts as the Cysteine persulfide intermediate in catalysis. A substrate-binding site is contributed by Arg253.

The catalysed reaction is thiosulfate + hydrogen cyanide = thiocyanate + sulfite + 2 H(+). The polypeptide is Thiosulfate sulfurtransferase (thtR) (Corynebacterium glutamicum (strain ATCC 13032 / DSM 20300 / JCM 1318 / BCRC 11384 / CCUG 27702 / LMG 3730 / NBRC 12168 / NCIMB 10025 / NRRL B-2784 / 534)).